We begin with the raw amino-acid sequence, 118 residues long: Small ribosomal subunit protein uS13 (118 aa).

Residues 92–118 form a disordered region; sequence RKGLPVRGQRTKTNARTRKGPRKPIRK.

Belongs to the universal ribosomal protein uS13 family. Part of the 30S ribosomal subunit. Forms a loose heterodimer with protein S19. Forms two bridges to the 50S subunit in the 70S ribosome.

In terms of biological role, located at the top of the head of the 30S subunit, it contacts several helices of the 16S rRNA. In the 70S ribosome it contacts the 23S rRNA (bridge B1a) and protein L5 of the 50S subunit (bridge B1b), connecting the 2 subunits; these bridges are implicated in subunit movement. Contacts the tRNAs in the A and P-sites. This is Small ribosomal subunit protein uS13 from Pseudomonas putida (strain ATCC 700007 / DSM 6899 / JCM 31910 / BCRC 17059 / LMG 24140 / F1).